We begin with the raw amino-acid sequence, 379 residues long: UDP-N-acetylglucosamine--N-acetylmuramyl-(pentapeptide) pyrophosphoryl-undecaprenol N-acetylglucosamine transferase (379 aa).

Residues 17 to 19 (TGG), Asn128, Arg169, Ser197, and Gln298 contribute to the UDP-N-acetyl-alpha-D-glucosamine site.

It belongs to the glycosyltransferase 28 family. MurG subfamily.

It localises to the cell inner membrane. The catalysed reaction is di-trans,octa-cis-undecaprenyl diphospho-N-acetyl-alpha-D-muramoyl-L-alanyl-D-glutamyl-meso-2,6-diaminopimeloyl-D-alanyl-D-alanine + UDP-N-acetyl-alpha-D-glucosamine = di-trans,octa-cis-undecaprenyl diphospho-[N-acetyl-alpha-D-glucosaminyl-(1-&gt;4)]-N-acetyl-alpha-D-muramoyl-L-alanyl-D-glutamyl-meso-2,6-diaminopimeloyl-D-alanyl-D-alanine + UDP + H(+). Its pathway is cell wall biogenesis; peptidoglycan biosynthesis. Functionally, cell wall formation. Catalyzes the transfer of a GlcNAc subunit on undecaprenyl-pyrophosphoryl-MurNAc-pentapeptide (lipid intermediate I) to form undecaprenyl-pyrophosphoryl-MurNAc-(pentapeptide)GlcNAc (lipid intermediate II). The polypeptide is UDP-N-acetylglucosamine--N-acetylmuramyl-(pentapeptide) pyrophosphoryl-undecaprenol N-acetylglucosamine transferase (Brucella abortus (strain S19)).